The following is a 367-amino-acid chain: Glutamate 5-kinase (367 aa).

An ATP-binding site is contributed by K9. The substrate site is built by S49, D136, and N148. ATP contacts are provided by residues 168–169 (TD) and 210–216 (TGGMKSK). Positions 276–350 (SGQIEIDAGA…GMQSQHIQAR (75 aa)) constitute a PUA domain.

Belongs to the glutamate 5-kinase family.

It localises to the cytoplasm. It catalyses the reaction L-glutamate + ATP = L-glutamyl 5-phosphate + ADP. It functions in the pathway amino-acid biosynthesis; L-proline biosynthesis; L-glutamate 5-semialdehyde from L-glutamate: step 1/2. Its function is as follows. Catalyzes the transfer of a phosphate group to glutamate to form L-glutamate 5-phosphate. The protein is Glutamate 5-kinase of Bacillus cereus (strain ZK / E33L).